The chain runs to 313 residues: Intelectin-1b (313 aa).

Residues 1 to 19 (MTQLGFLLFIMIATRVCSA) form the signal peptide. The region spanning 32 to 251 (SFFSSLPRSC…NNERAASALC (220 aa)) is the Fibrinogen C-terminal domain. A disulfide bridge connects residues cysteine 41 and cysteine 70. Histidine 86, glutamate 87, asparagine 89, glycine 92, glycine 97, aspartate 98, and aspartate 133 together coordinate Ca(2+). 3 cysteine pairs are disulfide-bonded: cysteine 94–cysteine 280, cysteine 199–cysteine 259, and cysteine 251–cysteine 265. Asparagine 163 carries N-linked (GlcNAc...) asparagine glycosylation. 4 residues coordinate Ca(2+): asparagine 260, glutamate 262, glutamate 274, and aspartate 282. A carbohydrate contacts are provided by residues 262-263 (EH) and glutamate 274. A lipid anchor (GPI-anchor amidated serine) is attached at serine 298. Positions 299–313 (NSREITEAAVLLFYR) are excised as a propeptide.

In terms of tissue distribution, expressed in the globlet and Paneth cells of the small intestine of infected mice. Expressed in the ileum of uninfected mice.

It is found in the cell membrane. Its subcellular location is the secreted. In terms of biological role, may play a protective role in the innate immune response to parasite infection. The chain is Intelectin-1b (Itln1b) from Mus musculus (Mouse).